The sequence spans 149 residues: Transcriptional regulator MraZ (149 aa).

2 consecutive SpoVT-AbrB domains span residues 7 to 54 (KYVN…GISH) and 83 to 126 (AVQL…QPQN).

The protein belongs to the MraZ family. As to quaternary structure, forms oligomers.

Its subcellular location is the cytoplasm. The protein resides in the nucleoid. This chain is Transcriptional regulator MraZ, found in Rickettsia felis (strain ATCC VR-1525 / URRWXCal2) (Rickettsia azadi).